Consider the following 342-residue polypeptide: Ankyrin repeat domain-containing protein 2A (342 aa).

The interval 1–41 (MASNSEKNPLLSDEKPKSTEENKSSKPESASGSSTSSAMPG) is disordered. Basic and acidic residues predominate over residues 12–26 (SDEKPKSTEENKSSK). The span at 27–37 (PESASGSSTSS) shows a compositional bias: low complexity. 4 ANK repeats span residues 217–246 (EEESIVHQTASLGDVEGLKAALASGGNKDE), 250–279 (EGRTALHFACGYGELKCAQVLIDAGASVNA), 283–312 (NKNTPLHYAAGYGRKECVSLLLENGAAVTL), and 316–342 (DEKTPIDVAKLNSQLEVVKLLEKDAFL). A 1,2-diacyl-3-O-(beta-D-galactosyl)-sn-glycerol is bound by residues His-223 and Glu-246. Residues Tyr-294 and Arg-296 each coordinate a 1,2-diacyl-sn-glycero-3-phospho-(1'-sn-glycerol).

In terms of assembly, interacts with TOM20-4, CYTB5-E, CBR1, APX3, APX5, TOC34 and GRF6. Binds to chloroplast outer envelope membrane (OEM) protein targeting signals, as well as to chloroplasts. Interacts with OEP7. Binds to HSP17.8 via its ankyrin repeats, this interaction enhances chaperone activity and chloroplast binding. Also interacts with HSP17.4A, HSP17.6A and HSP18.1. Binds specifically to two chloroplast glycolipids, monogalactosyldiacylglycerol (MGDG) and phosphatidylglycerol (PG). In terms of tissue distribution, ubiquitously expressed at basal level.

The protein localises to the cytoplasm. Its subcellular location is the nucleus. It localises to the plastid. It is found in the chloroplast outer membrane. Its function is as follows. Exhibits chaperone activity toward chloroplast outer envelope membrane, mitochondrion outer membrane, endoplasmic reticulum membrane and peroxisomal proteins, by recruiting specific proteins containing a single transmembrane associated with an AKR2A-binding sequence (ABS) and subsequently binding glycolipids (e.g. monogalactosyldiacylglycerol (MGDG) and phosphatidylglycerol (PG)) present in the membrane of the target organelle. Seems to be involved in the regulation of hydrogen peroxide levels during biotic and abiotic stresses by optimizing the ascorbate peroxidase 3 (APX3) hydrogen peroxide-degrading activity. This regulation might be monitored by GRF6. Cytosolic targeting factor for chloroplast outer membrane (COM) proteins that mediates sorting and targeting of nascent chloroplast outer envelope membrane (OEM) proteins to the chloroplast. Facilitates the targeting of OEP7 to chloroplasts. Facilitates the targeting of APX3 to peroxisomes. Involved in cellular metabolism (e.g. peroxisome activity) and required for plant growth and development. This Arabidopsis thaliana (Mouse-ear cress) protein is Ankyrin repeat domain-containing protein 2A.